The sequence spans 69 residues: DNA-directed RNA polymerase subunit epsilon (69 aa).

Belongs to the RNA polymerase subunit epsilon family. RNAP is composed of a core of 2 alpha, a beta and a beta' subunit. The core is associated with a delta subunit, and at least one of epsilon or omega. When a sigma factor is associated with the core the holoenzyme is formed, which can initiate transcription.

The catalysed reaction is RNA(n) + a ribonucleoside 5'-triphosphate = RNA(n+1) + diphosphate. In terms of biological role, a non-essential component of RNA polymerase (RNAP). The protein is DNA-directed RNA polymerase subunit epsilon of Lysinibacillus sphaericus (strain C3-41).